We begin with the raw amino-acid sequence, 333 residues long: Threonine-phosphate decarboxylase (333 aa).

Residue K199 is modified to N6-(pyridoxal phosphate)lysine.

This sequence belongs to the class-I pyridoxal-phosphate-dependent aminotransferase family. Homodimer. It depends on pyridoxal 5'-phosphate as a cofactor.

It is found in the cytoplasm. The catalysed reaction is O-phospho-L-threonine + H(+) = (R)-1-aminopropan-2-yl phosphate + CO2. It participates in cofactor biosynthesis; adenosylcobalamin biosynthesis. Decarboxylates L-threonine-O-3-phosphate to yield (R)-1-amino-2-propanol O-2-phosphate, the precursor for the linkage between the nucleotide loop and the corrin ring in cobalamin. The polypeptide is Threonine-phosphate decarboxylase (cobC) (Sinorhizobium sp).